The chain runs to 650 residues: Threonine--tRNA ligase (650 aa).

Residues 3-65 (DLVKVTLPDG…ERDARLEIVT (63 aa)) form the TGS domain. The tract at residues 248-548 (DHRRLGPQLG…LVEHYAGAFP (301 aa)) is catalytic. Residues cysteine 349, histidine 400, and histidine 525 each contribute to the Zn(2+) site.

This sequence belongs to the class-II aminoacyl-tRNA synthetase family. Homodimer. Zn(2+) serves as cofactor.

The protein resides in the cytoplasm. The catalysed reaction is tRNA(Thr) + L-threonine + ATP = L-threonyl-tRNA(Thr) + AMP + diphosphate + H(+). Functionally, catalyzes the attachment of threonine to tRNA(Thr) in a two-step reaction: L-threonine is first activated by ATP to form Thr-AMP and then transferred to the acceptor end of tRNA(Thr). Also edits incorrectly charged L-seryl-tRNA(Thr). In Anaeromyxobacter dehalogenans (strain 2CP-1 / ATCC BAA-258), this protein is Threonine--tRNA ligase.